Here is a 457-residue protein sequence, read N- to C-terminus: Multidrug resistance protein MdtK (457 aa).

The next 12 helical transmembrane spans lie at 11–31 (LLALAIPVILAQVAQTAMGFV), 53–73 (IWLPAILFGHGLLLALTPVIA), 93–113 (WLAGFVSVLVMIVLWNAGYII), 127–147 (AVGYLRALLWGAPGYLFFQVA), 160–180 (GMVMGFLGLLVNIPVNYIFIY), 188–208 (LGGIGCGVATAAVYWVMFIAM), 243–263 (LPIALALFFEVTLFAVVALLV), 276–296 (IALNFSSLMFVLPMSLAAAVT), 314–334 (AARTGLGVGICMAVVTAIFTV), 350–370 (VVALAAQLMLLAAVYQISDSI), 387–407 (IFFITFTAYWVLGLPSGYILA), and 418–438 (PAGFWMGFIIGLTSAAVLMML).

This sequence belongs to the multi antimicrobial extrusion (MATE) (TC 2.A.66.1) family. MdtK subfamily.

The protein localises to the cell inner membrane. Its function is as follows. Multidrug efflux pump that functions probably as a Na(+)/drug antiporter. This is Multidrug resistance protein MdtK from Salmonella heidelberg (strain SL476).